The sequence spans 57 residues: Potassium channel toxin alpha-KTx 8.5 (57 aa).

The first 28 residues, 1–28 (MSRLYAIILIALVLNVIMTIMPDSKVEA), serve as a signal peptide directing secretion. 3 cysteine pairs are disulfide-bonded: Cys31/Cys47, Cys34/Cys52, and Cys38/Cys54.

It belongs to the short scorpion toxin superfamily. Potassium channel inhibitor family. Alpha-KTx 08 subfamily. In terms of tissue distribution, expressed by the venom gland.

It localises to the secreted. Selectively inhibits voltage-gated potassium channels Kv1.2/KCNA2 (IC(50)=183 nM). The protein is Potassium channel toxin alpha-KTx 8.5 of Odontobuthus doriae (Yellow Iranian scorpion).